We begin with the raw amino-acid sequence, 233 residues long: tRNA (guanine-N(7)-)-methyltransferase (233 aa).

A disordered region spans residues 1–21 (MTEESHPLRGAGNFFGRRHGK). Glutamate 64, glutamate 89, aspartate 116, and aspartate 138 together coordinate S-adenosyl-L-methionine. Aspartate 138 is an active-site residue. Substrate is bound by residues lysine 142, aspartate 174, and 212–215 (TRYE).

It belongs to the class I-like SAM-binding methyltransferase superfamily. TrmB family.

It catalyses the reaction guanosine(46) in tRNA + S-adenosyl-L-methionine = N(7)-methylguanosine(46) in tRNA + S-adenosyl-L-homocysteine. It participates in tRNA modification; N(7)-methylguanine-tRNA biosynthesis. Catalyzes the formation of N(7)-methylguanine at position 46 (m7G46) in tRNA. This is tRNA (guanine-N(7)-)-methyltransferase from Brucella anthropi (strain ATCC 49188 / DSM 6882 / CCUG 24695 / JCM 21032 / LMG 3331 / NBRC 15819 / NCTC 12168 / Alc 37) (Ochrobactrum anthropi).